We begin with the raw amino-acid sequence, 380 residues long: Outer membrane protein assembly factor BamB (380 aa).

The first 18 residues, 1–18 (MVQWKHAALLALALAVVG), serve as a signal peptide directing secretion. Cysteine 19 carries N-palmitoyl cysteine lipidation. Residue cysteine 19 is the site of S-diacylglycerol cysteine attachment.

The protein belongs to the BamB family. As to quaternary structure, part of the Bam complex.

It is found in the cell outer membrane. In terms of biological role, part of the outer membrane protein assembly complex, which is involved in assembly and insertion of beta-barrel proteins into the outer membrane. This is Outer membrane protein assembly factor BamB from Pseudomonas aeruginosa (strain ATCC 15692 / DSM 22644 / CIP 104116 / JCM 14847 / LMG 12228 / 1C / PRS 101 / PAO1).